The primary structure comprises 264 residues: Thymidylate synthase (264 aa).

Arg-21 contributes to the dUMP binding site. Residue His-51 participates in (6R)-5,10-methylene-5,6,7,8-tetrahydrofolate binding. A dUMP-binding site is contributed by 126-127 (RR). Cys-146 acts as the Nucleophile in catalysis. DUMP-binding positions include 166–169 (RSAD), Asn-177, and 207–209 (HLY). Asp-169 is a (6R)-5,10-methylene-5,6,7,8-tetrahydrofolate binding site. Ala-263 serves as a coordination point for (6R)-5,10-methylene-5,6,7,8-tetrahydrofolate.

Belongs to the thymidylate synthase family. Bacterial-type ThyA subfamily. In terms of assembly, homodimer.

It is found in the cytoplasm. It catalyses the reaction dUMP + (6R)-5,10-methylene-5,6,7,8-tetrahydrofolate = 7,8-dihydrofolate + dTMP. It functions in the pathway pyrimidine metabolism; dTTP biosynthesis. Functionally, catalyzes the reductive methylation of 2'-deoxyuridine-5'-monophosphate (dUMP) to 2'-deoxythymidine-5'-monophosphate (dTMP) while utilizing 5,10-methylenetetrahydrofolate (mTHF) as the methyl donor and reductant in the reaction, yielding dihydrofolate (DHF) as a by-product. This enzymatic reaction provides an intracellular de novo source of dTMP, an essential precursor for DNA biosynthesis. This Methylobacterium nodulans (strain LMG 21967 / CNCM I-2342 / ORS 2060) protein is Thymidylate synthase.